Reading from the N-terminus, the 461-residue chain is Argininosuccinate lyase (461 aa).

The protein belongs to the lyase 1 family. Argininosuccinate lyase subfamily.

The protein resides in the cytoplasm. It catalyses the reaction 2-(N(omega)-L-arginino)succinate = fumarate + L-arginine. It participates in amino-acid biosynthesis; L-arginine biosynthesis; L-arginine from L-ornithine and carbamoyl phosphate: step 3/3. In Symbiobacterium thermophilum (strain DSM 24528 / JCM 14929 / IAM 14863 / T), this protein is Argininosuccinate lyase.